A 216-amino-acid chain; its full sequence is Ion-translocating oxidoreductase complex subunit G (216 aa).

A helical membrane pass occupies residues 14 to 34 (ALVLGSFGFLAASFVSIIYVI). Threonine 181 is modified (FMN phosphoryl threonine).

It belongs to the RnfG family. In terms of assembly, the complex is composed of six subunits: RnfA, RnfB, RnfC, RnfD, RnfE and RnfG. It depends on FMN as a cofactor.

The protein resides in the cell inner membrane. Functionally, part of a membrane-bound complex that couples electron transfer with translocation of ions across the membrane. The protein is Ion-translocating oxidoreductase complex subunit G of Buchnera aphidicola subsp. Baizongia pistaciae (strain Bp).